We begin with the raw amino-acid sequence, 331 residues long: E3 ubiquitin-protein ligase Siah2 (331 aa).

Residues Met-1–Gly-26 are disordered. The segment covering Gly-9–Gly-26 has biased composition (gly residues). The RING-type zinc finger occupies Cys-89 to Arg-124. The SBD stretch occupies residues Val-139 to Cys-331. The SIAH-type zinc-finger motif lies at Thr-142–Lys-202. Zn(2+)-binding residues include Cys-147, Cys-154, His-166, Cys-170, Cys-177, Cys-184, His-196, and His-201.

This sequence belongs to the SINA (Seven in absentia) family. As to quaternary structure, homodimer. In terms of tissue distribution, in embryos it is expressed in all blastomeres starting at the mid-blastulla. After 20 somite stage, it is expressed mainly in the posterior part. Expressed in brain, including the eye, the cranial cavity, otic vesicle, optic chiasm and in the gut.

The enzyme catalyses S-ubiquitinyl-[E2 ubiquitin-conjugating enzyme]-L-cysteine + [acceptor protein]-L-lysine = [E2 ubiquitin-conjugating enzyme]-L-cysteine + N(6)-ubiquitinyl-[acceptor protein]-L-lysine.. Its pathway is protein modification; protein ubiquitination. In terms of biological role, E3 ubiquitin-protein ligase that mediates ubiquitination and subsequent proteasomal degradation of target proteins. E3 ubiquitin ligases accept ubiquitin from an E2 ubiquitin-conjugating enzyme in the form of a thioester and then directly transfers the ubiquitin to targeted substrates. It probably triggers the ubiquitin-mediated degradation of different substrates. Induces cellular growth arrest by inhibiting the G2/M transition. May play a role in the regulation of the cellular clock function. This is E3 ubiquitin-protein ligase Siah2 (siah2l) from Danio rerio (Zebrafish).